The following is a 405-amino-acid chain: Magnesium-protoporphyrin IX monomethyl ester [oxidative] cyclase, chloroplastic (405 aa).

A chloroplast-targeting transit peptide spans 1 to 43 (MATEMALVKPISKFSTSSPIFSNSRYGKFTTVRMSSTSQSTTK).

This sequence belongs to the AcsF family. Fe cation serves as cofactor.

The protein resides in the plastid. It is found in the chloroplast. It carries out the reaction Mg-protoporphyrin IX 13-monomethyl ester + 3 NADPH + 3 O2 + 2 H(+) = 3,8-divinyl protochlorophyllide a + 3 NADP(+) + 5 H2O. The protein operates within porphyrin-containing compound metabolism; chlorophyll biosynthesis. Functionally, catalyzes the formation of the isocyclic ring in chlorophyll biosynthesis. Mediates the cyclase reaction, which results in the formation of divinylprotochlorophyllide (Pchlide) characteristic of all chlorophylls from magnesium-protoporphyrin IX 13-monomethyl ester (MgPMME). This chain is Magnesium-protoporphyrin IX monomethyl ester [oxidative] cyclase, chloroplastic (CRD1), found in Gossypium hirsutum (Upland cotton).